The chain runs to 721 residues: Catalase-peroxidase (721 aa).

A cross-link (tryptophyl-tyrosyl-methioninium (Trp-Tyr) (with M-238)) is located at residues Trp-89–Tyr-212. His-90 acts as the Proton acceptor in catalysis. A cross-link (tryptophyl-tyrosyl-methioninium (Tyr-Met) (with W-89)) is located at residues Tyr-212–Met-238. His-253 is a binding site for heme b.

This sequence belongs to the peroxidase family. Peroxidase/catalase subfamily. In terms of assembly, homodimer or homotetramer. The cofactor is heme b. Formation of the three residue Trp-Tyr-Met cross-link is important for the catalase, but not the peroxidase activity of the enzyme.

The catalysed reaction is H2O2 + AH2 = A + 2 H2O. The enzyme catalyses 2 H2O2 = O2 + 2 H2O. In terms of biological role, bifunctional enzyme with both catalase and broad-spectrum peroxidase activity. The polypeptide is Catalase-peroxidase (Shewanella baltica (strain OS155 / ATCC BAA-1091)).